The primary structure comprises 434 residues: MEEELVVISKSIVNPRSLKKPTSVKKIQLTPWDLSRLRFGYLQRGLLFHKIEVKQLQASLSVALDRFYPLAGRLVKLKNDDDTVSFFISCDGSGVEFVHAVAKNIELSDVLELSGSVPGFFASFFPATGIKNYHGVSRSLLMVQVTEMKDGVFIGFGYNSTVADATSIWKFINAWSEICSKDSSGSQTFQRRLHLKGWFFDEIDYPIHIPDPETKPTSYVTTPTNLQEKMFHVTKENVLKLDAKANDEADQKISSIQAVLAYIWRSMVKHSGMSREEETHCRLPINMRQRLNPPLEEECFGNVSQTGIATVTVGELLDHGLGWAAMQINNMELSQTDEKAKAFAENWVKNIKIPVSVGSKDLVVTNSHRFDVYCNDFGWGKPIAARAGPPYLNGRLVVFKGIGEASLDFQACLLPQVVEKLVKDAEFNEYVSIV.

The active-site Proton acceptor is aspartate 376.

This sequence belongs to the plant acyltransferase family.

Its function is as follows. Required for pathogen-induced salicylic acid (SA) accumulation and SA-mediated resistance to virulent and avirulent pathogens (e.g. P.syringae). The polypeptide is Protein ENHANCED PSEUDOMONAS SUSCEPTIBILITY 1 (Arabidopsis thaliana (Mouse-ear cress)).